The chain runs to 151 residues: Small ribosomal subunit protein uS15 (151 aa).

A disordered region spans residues M1–R20.

The protein belongs to the universal ribosomal protein uS15 family. In terms of assembly, component of the small ribosomal subunit. Part of the small subunit (SSU) processome, composed of more than 70 proteins and the RNA chaperone small nucleolar RNA (snoRNA) U3.

It localises to the cytoplasm. Its subcellular location is the nucleus. The protein localises to the nucleolus. In terms of biological role, component of the small ribosomal subunit. The ribosome is a large ribonucleoprotein complex responsible for the synthesis of proteins in the cell. Part of the small subunit (SSU) processome, first precursor of the small eukaryotic ribosomal subunit. During the assembly of the SSU processome in the nucleolus, many ribosome biogenesis factors, an RNA chaperone and ribosomal proteins associate with the nascent pre-rRNA and work in concert to generate RNA folding, modifications, rearrangements and cleavage as well as targeted degradation of pre-ribosomal RNA by the RNA exosome. This Dictyostelium discoideum (Social amoeba) protein is Small ribosomal subunit protein uS15 (rps13).